Here is a 622-residue protein sequence, read N- to C-terminus: Lamin Dm0 (622 aa).

A disordered region spans residues 1–50; sequence MSSKSRRAGTATPQPGNTSTPRPPSAGPQPPPPSTHSQTASSPLSPTRHS. S2 carries the N-acetylserine modification. A head region spans residues 2 to 56; the sequence is SSKSRRAGTATPQPGNTSTPRPPSAGPQPPPPSTHSQTASSPLSPTRHSRVAEKV. A phosphothreonine mark is found at T10, T12, and T20. Residues 21 to 34 are compositionally biased toward pro residues; sequence PRPPSAGPQPPPPS. Phosphoserine occurs at positions 25 and 34. T39 is subject to Phosphothreonine. Phosphoserine is present on residues S41, S42, and S45. T47 carries the post-translational modification Phosphothreonine. The 357-residue stretch at 54–410 folds into the IF rod domain; the sequence is EKVELQNLND…KLLVGEEARL (357 aa). Residues 55-91 form a coil 1A region; the sequence is KVELQNLNDRLATYIDRVRNLETENSRLTIEVQTTRD. The linker 1 stretch occupies residues 92–103; that stretch reads TVTRETTNIKNI. The tract at residues 104-241 is coil 1B; sequence FEAELLETRR…QIHSQEINES (138 aa). S235 carries the post-translational modification Phosphoserine. The interval 242 to 265 is linker 2; that stretch reads RRIKQTEYSEIDGRLSSEYDAKLK. Phosphotyrosine is present on Y249. Phosphoserine occurs at positions 250 and 311. Positions 266 to 408 are coil 2; sequence QSLQELRAQY…YDKLLVGEEA (143 aa). Positions 409–619 are tail; that stretch reads RLNITPATNT…GDPQQSNEKC (211 aa). Phosphothreonine occurs at positions 413 and 435. Residues 429 to 440 show a composition bias toward polar residues; sequence RNSTRATPSRRT. The segment at 429 to 448 is disordered; the sequence is RNSTRATPSRRTPSAAVKRK. At S442 the chain carries Phosphoserine. Positions 446–451 match the Nuclear localization signal motif; it reads KRKRAV. A phosphoserine mark is found at S455 and S459. The LTD domain occupies 461-588; the sequence is ADYYVSASAK…RIVSQHTSSS (128 aa). Phosphoserine is present on S595. T597 is modified (phosphothreonine). Residues 603-622 are disordered; it reads EQLYHQQGDPQQSNEKCAIM. Over residues 605 to 622 the composition is skewed to polar residues; sequence LYHQQGDPQQSNEKCAIM. The residue at position 615 (S615) is a Phosphoserine. The residue at position 619 (C619) is a Cysteine methyl ester. C619 is lipidated: S-farnesyl cysteine. The propeptide at 620–622 is removed in mature form; that stretch reads AIM.

It belongs to the intermediate filament family. As to quaternary structure, interacts directly with LBR. Interacts with MAN1. Interacts with Ote. In terms of processing, three forms of lamin have been identified in D.melanogaster, lamin Dm0 is rapidly processed to lamin Dm1 in the cytoplasm, Dm1 is then assembled in the nuclear envelope and is then phosphorylated, forming lamin Dm2. Constitutively expressed in all tissues (at protein level). Expressed in spermatocytes (at protein level).

The protein resides in the nucleus. It is found in the nucleus inner membrane. Its subcellular location is the nucleus envelope. It localises to the nucleus lamina. The protein localises to the cytoplasm. The protein resides in the cytoskeleton. It is found in the spindle pole. In terms of biological role, lamins are components of the nuclear lamina, a fibrous layer on the nucleoplasmic side of the inner nuclear membrane, which is thought to provide a framework for the nuclear envelope and may also interact with chromatin. May have a role in the localization of the LEM domain proteins Ote, bocks and MAN1 to the nuclear membrane. In spermatocytes, plays a role in maintaining type-A lamin LamC nuclear localization; regulates meiotic cytokinesis by maintaining the structure of the spindle envelope, and by contributing to the formation of the contractile ring and central spindle. Required for nuclear migration and to link the microtubule organizing center (MTOC) to the nucleus. In addition, is required for nuclear envelope localization of klar. This is Lamin Dm0 from Drosophila melanogaster (Fruit fly).